We begin with the raw amino-acid sequence, 156 residues long: MAEEINNQEVQPEFHIQRVYTKDVSFEAPNTPHIFQKEWQPDVKLDMDTKTNILADSVYEVVLTLTVTCKLETETAFLCEVQQAGIFTIGNLPEPQLAHCLAAFCPNILFPYAREAVSNLVSKGSFPQLNLAPVNFDALFAQHMAQAQAQQATAEA.

It belongs to the SecB family. In terms of assembly, homotetramer, a dimer of dimers. One homotetramer interacts with 1 SecA dimer.

The protein resides in the cytoplasm. Functionally, one of the proteins required for the normal export of preproteins out of the cell cytoplasm. It is a molecular chaperone that binds to a subset of precursor proteins, maintaining them in a translocation-competent state. It also specifically binds to its receptor SecA. The chain is Protein-export protein SecB from Aeromonas hydrophila subsp. hydrophila (strain ATCC 7966 / DSM 30187 / BCRC 13018 / CCUG 14551 / JCM 1027 / KCTC 2358 / NCIMB 9240 / NCTC 8049).